A 317-amino-acid polypeptide reads, in one-letter code: Lipoyl synthase (317 aa).

Residues Met-1–Pro-28 are disordered. 7 residues coordinate [4Fe-4S] cluster: Cys-64, Cys-69, Cys-75, Cys-90, Cys-94, Cys-97, and Ser-304. Residues Phe-76–Arg-293 form the Radical SAM core domain.

Belongs to the radical SAM superfamily. Lipoyl synthase family. Requires [4Fe-4S] cluster as cofactor.

The protein localises to the cytoplasm. The enzyme catalyses [[Fe-S] cluster scaffold protein carrying a second [4Fe-4S](2+) cluster] + N(6)-octanoyl-L-lysyl-[protein] + 2 oxidized [2Fe-2S]-[ferredoxin] + 2 S-adenosyl-L-methionine + 4 H(+) = [[Fe-S] cluster scaffold protein] + N(6)-[(R)-dihydrolipoyl]-L-lysyl-[protein] + 4 Fe(3+) + 2 hydrogen sulfide + 2 5'-deoxyadenosine + 2 L-methionine + 2 reduced [2Fe-2S]-[ferredoxin]. It functions in the pathway protein modification; protein lipoylation via endogenous pathway; protein N(6)-(lipoyl)lysine from octanoyl-[acyl-carrier-protein]: step 2/2. Catalyzes the radical-mediated insertion of two sulfur atoms into the C-6 and C-8 positions of the octanoyl moiety bound to the lipoyl domains of lipoate-dependent enzymes, thereby converting the octanoylated domains into lipoylated derivatives. This chain is Lipoyl synthase, found in Acidithiobacillus ferrooxidans (strain ATCC 23270 / DSM 14882 / CIP 104768 / NCIMB 8455) (Ferrobacillus ferrooxidans (strain ATCC 23270)).